An 824-amino-acid polypeptide reads, in one-letter code: Glycophorin-binding protein 130 (824 aa).

A PEXEL motif motif is present at residues Arg-84 to Glu-88. Disordered regions lie at residues Glu-97 to Met-236, Asn-258 to Ser-291, Asp-310 to Gln-334, Asn-358 to Gln-384, Asn-408 to Glu-431, Asn-457 to Gly-482, Asn-507 to Gly-532, Asp-559 to Gly-582, Asp-659 to Gln-683, Asn-711 to Gln-733, and Asp-759 to Gln-783. Basic and acidic residues-rich tracts occupy residues Thr-117–Gln-140 and Lys-174–Ala-198. The span at Lys-200–Ser-228 shows a compositional bias: polar residues. GBP repeat units follow at residues Leu-226 to Asp-275, Leu-276 to Asp-325, Leu-326 to Asp-375, Leu-376 to Glu-424, Leu-425 to Asp-474, Leu-475 to Asp-524, Leu-525 to Asp-574, Leu-575 to Glu-624, Leu-625 to Asp-674, Leu-675 to Asp-724, Leu-725 to Asp-774, and Leu-775 to Ala-824. 10 stretches are compositionally biased toward basic and acidic residues: residues Glu-264–Leu-276, Asp-314–Leu-326, Glu-364–Leu-376, Glu-414–Thr-426, Glu-463–Leu-475, Glu-513–Leu-525, Glu-563–Leu-575, Glu-663–Leu-675, Glu-713–Leu-725, and Asp-763–Leu-775.

As to quaternary structure, interacts with host glycophorin.

It localises to the secreted. Its subcellular location is the cell surface. It is found in the host cytoplasm. Involved in merozoite invasion of host erythrocytes. This chain is Glycophorin-binding protein 130, found in Plasmodium falciparum (isolate 3D7).